Reading from the N-terminus, the 93-residue chain is MKQSLAVKTFEDLFAELGERARTRPAGSATVAALDGGVHGLGKKILEEAGEVWLAAEHESDDALAGEISQLLYWTQVLMIARGLSLDDVYRKL.

The protein belongs to the PRA-PH family.

It is found in the cytoplasm. It carries out the reaction 1-(5-phospho-beta-D-ribosyl)-ATP + H2O = 1-(5-phospho-beta-D-ribosyl)-5'-AMP + diphosphate + H(+). It functions in the pathway amino-acid biosynthesis; L-histidine biosynthesis; L-histidine from 5-phospho-alpha-D-ribose 1-diphosphate: step 2/9. This chain is Phosphoribosyl-ATP pyrophosphatase, found in Mycobacterium avium (strain 104).